We begin with the raw amino-acid sequence, 416 residues long: Lysosome-associated membrane glycoprotein 3 (416 aa).

The N-terminal stretch at 1–27 (MPRQLSAAAALFASLAVILHDGSQMRA) is a signal peptide. Topologically, residues 28–381 (KAFPETRDYS…NVDECSSDYT (354 aa)) are lumenal. Residues Asn112, Asn158, Asn164, Asn200, Asn232, Asn266, and Asn291 are each glycosylated (N-linked (GlcNAc...) asparagine). Disordered stretches follow at residues 136–167 (PTITPPAHTTGTSSSTVSHTTGNTTQPSNQTT) and 179–219 (STTG…LAPQ). Residues 143-160 (HTTGTSSSTVSHTTGNTT) show a composition bias toward low complexity. Positions 188–208 (PTHAPGTTAAAHNTTRTAAPA) are enriched in low complexity. Residues Cys237 and Cys274 are joined by a disulfide bond. A disulfide bond links Cys339 and Cys376. A helical membrane pass occupies residues 382-402 (IVLPVIGAIVVGLCLMGMGVY). The Cytoplasmic portion of the chain corresponds to 403-416 (KIRLRCQSSGYQRI).

The protein belongs to the LAMP family. As to quaternary structure, monomer. Interacts with FURIN. In terms of assembly, (Microbial infection) Interacts with mumps virus protein F; this interaction promotes protein F cleavage by FURIN. As to expression, detected in tonsil interdigitating dendritic cells, in spleen, lymph node, Peyer's patches in the small instestine, in thymus medulla and in B-cells (at protein level). Expressed in lymphoid organs and dendritic cells. Expressed in lung. Up-regulated in carcinomas of the esophagus, colon, rectum, ureter, stomach, breast, fallopian tube, thyroid and parotid tissues.

It is found in the cell surface. The protein resides in the lysosome membrane. Its subcellular location is the cytoplasmic vesicle membrane. It localises to the early endosome membrane. Lysosomal membrane glycoprotein which plays a role in the unfolded protein response (UPR) that contributes to protein degradation and cell survival during proteasomal dysfunction. Plays a role in the process of fusion of the lysosome with the autophagosome, thereby modulating the autophagic process. Promotes hepatocellular lipogenesis through activation of the PI3K/Akt pathway. May also play a role in dendritic cell function and in adaptive immunity. Functionally, (Microbial infection) Plays a positive role in post-entry steps of influenza A virus replication, either virus uncoating, cytosolic transport, or nuclear import of viral components, and promotes nuclear accumulation of influenza nucleoprotein/NP at early stages of viral infection. In terms of biological role, (Microbial infection) Supports the FURIN-mediated cleavage of mumps virus fusion protein F by interacting with both FURIN and the unprocessed form but not the processed form of the viral protein F. Its function is as follows. (Microbial infection) Promotes the intracellular proliferation of Salmonella typhimuium. The protein is Lysosome-associated membrane glycoprotein 3 (LAMP3) of Homo sapiens (Human).